The chain runs to 506 residues: Pisatin demethylase (506 aa).

Position 453 (cysteine 453) interacts with heme.

It belongs to the cytochrome P450 family. It depends on heme as a cofactor.

Can detoxify the phytoalexin pisatin from garden pea. Pisatin is an antimicrobial compound produced by pea in response to infection by plant pathogens. This is Pisatin demethylase (PDA6-1) from Fusarium vanettenii (Neocosmospora pisi).